A 454-amino-acid polypeptide reads, in one-letter code: Cerebellar degeneration-related protein 2 (454 aa).

Coiled coils occupy residues 44–142 (ELED…SGQG) and 192–265 (EEEN…QSEH). The tract at residues 134–153 (EELKSSGQGRRSPGKCDQEK) is disordered. At serine 311 the chain carries Phosphoserine. Residues 346–380 (LHEVDTQYSALKVKYEELLKKCQEEQDSLSHKAVQ) adopt a coiled-coil conformation.

Belongs to the CDR2 family.

The polypeptide is Cerebellar degeneration-related protein 2 (CDR2) (Homo sapiens (Human)).